The chain runs to 166 residues: NAD(P)H-quinone oxidoreductase subunit I, chloroplastic (166 aa).

2 4Fe-4S ferredoxin-type domains span residues 55-84 and 95-124; these read GRIHFEFDKCIACEVCVRVCPIDLPVVDWK and LNYSIDFGICIFCGNCVEYCPTNCLSMTEE. Residues Cys-64, Cys-67, Cys-70, Cys-74, Cys-104, Cys-107, Cys-110, and Cys-114 each coordinate [4Fe-4S] cluster.

It belongs to the complex I 23 kDa subunit family. As to quaternary structure, NDH is composed of at least 16 different subunits, 5 of which are encoded in the nucleus. Requires [4Fe-4S] cluster as cofactor.

Its subcellular location is the plastid. It is found in the chloroplast thylakoid membrane. It catalyses the reaction a plastoquinone + NADH + (n+1) H(+)(in) = a plastoquinol + NAD(+) + n H(+)(out). The catalysed reaction is a plastoquinone + NADPH + (n+1) H(+)(in) = a plastoquinol + NADP(+) + n H(+)(out). Functionally, NDH shuttles electrons from NAD(P)H:plastoquinone, via FMN and iron-sulfur (Fe-S) centers, to quinones in the photosynthetic chain and possibly in a chloroplast respiratory chain. The immediate electron acceptor for the enzyme in this species is believed to be plastoquinone. Couples the redox reaction to proton translocation, and thus conserves the redox energy in a proton gradient. The polypeptide is NAD(P)H-quinone oxidoreductase subunit I, chloroplastic (Bahiopsis tomentosa (Tecote)).